Reading from the N-terminus, the 337-residue chain is MPNFSFVFFYDSAKITPISTALLGRRMNYLKIAQDSLSVESNALLQLSQRLGDDFNQVIDLILACEGRLVIGGIGKSGLIGKKMVATFASTGTPSFFLHPTEAFHGDLGMLKPIDIVMLISYSGETDDVNKLIPSLKNFGNKIIAVTSNKNSTLARHADYVLDITVEREVCPNNLAPTTSALVTLALGDALAVSLITARNFQPADFAKFHPGGSLGRRLLCKVKDQMQTRLPTILPTTNFTDCLTVMNEGRMGVALVMENEQLKGIITDGDIRRALTANGAGTLNKTAKDFMTSSPKTIHQDEFLSKAEDFMKAKKIHSLVVVNDENHVVGLVEFSS.

Residues 58 to 201 (VIDLILACEG…AVSLITARNF (144 aa)) enclose the SIS domain. Substrate is bound by residues 92 to 93 (GT), histidine 99, histidine 105, 131 to 140 (KLIPSLKNFG), 165 to 167 (TVE), threonine 237, and aspartate 290. Residue histidine 99 participates in Zn(2+) binding. Residues 227–284 (MQTRLPTILPTTNFTDCLTVMNEGRMGVALVMENEQLKGIITDGDIRRALTANGAGTL) form the CBS 1 domain. The CBS 2 domain maps to 292 to 337 (MTSSPKTIHQDEFLSKAEDFMKAKKIHSLVVVNDENHVVGLVEFSS).

This sequence belongs to the SIS family. GutQ/KpsF subfamily.

It carries out the reaction D-arabinose 5-phosphate = D-ribulose 5-phosphate. Functionally, catalyzes the reversible aldol-ketol isomerization between D-ribulose 5-phosphate (Ru5P) and D-arabinose 5-phosphate (A5P). The sequence is that of Probable arabinose 5-phosphate isomerase from Haemophilus influenzae (strain ATCC 51907 / DSM 11121 / KW20 / Rd).